Here is a 626-residue protein sequence, read N- to C-terminus: Chaperone protein HtpG (626 aa).

An a; substrate-binding region spans residues Met1–Arg341. Positions Glu342–Lys552 are b. Residues Asp490–Asn509 are disordered. Basic and acidic residues predominate over residues Lys498 to Asn509. The segment at Val553–Lys626 is c.

Belongs to the heat shock protein 90 family. In terms of assembly, homodimer.

The protein resides in the cytoplasm. In terms of biological role, molecular chaperone. Has ATPase activity. This Clostridium botulinum (strain Okra / Type B1) protein is Chaperone protein HtpG.